The following is a 314-amino-acid chain: Acetaldehyde dehydrogenase 1 (314 aa).

NAD(+) is bound at residue 11–14 (SGNI). Cys129 acts as the Acyl-thioester intermediate in catalysis. NAD(+) contacts are provided by residues 160-168 (SAGPGTRAN) and Asn292.

The protein belongs to the acetaldehyde dehydrogenase family.

It catalyses the reaction acetaldehyde + NAD(+) + CoA = acetyl-CoA + NADH + H(+). This is Acetaldehyde dehydrogenase 1 from Nocardioides sp. (strain ATCC BAA-499 / JS614).